We begin with the raw amino-acid sequence, 503 residues long: WD repeat-containing protein 55 homolog (503 aa).

A disordered region spans residues 1 to 131 (MHTHNNFKTP…DSAAFDLDDL (131 aa)). Composition is skewed to acidic residues over residues 12 to 23 (DADELDDLDDDM) and 37 to 56 (VGED…DMEA). The segment covering 59-76 (PNQNADENESISSDSSFD) has biased composition (polar residues). A compositionally biased stretch (acidic residues) spans 78 to 96 (NAEDSSDSDDSMLEEDEAE). WD repeat units follow at residues 157 to 196 (KLED…NKLL), 201 to 242 (VHSK…KLYE), 244 to 282 (AHDD…PIFE), 285 to 324 (EVED…LYVQ), 327 to 366 (PYEE…YHCD), and 411 to 450 (QHNM…DFGD). Residues 483-503 (TKEDEDNADNNDAAAGPSNSA) are disordered.

Belongs to the WD repeat WDR55 family.

In Drosophila pseudoobscura pseudoobscura (Fruit fly), this protein is WD repeat-containing protein 55 homolog.